Consider the following 84-residue polypeptide: DNA-directed RNA polymerase subunit Rpo5 (84 aa).

Belongs to the archaeal Rpo5/eukaryotic RPB5 RNA polymerase subunit family. Part of the 13-subunit RNA polymerase.

The protein localises to the cytoplasm. It catalyses the reaction RNA(n) + a ribonucleoside 5'-triphosphate = RNA(n+1) + diphosphate. In terms of biological role, DNA-dependent RNA polymerase (RNAP) catalyzes the transcription of DNA into RNA using the four ribonucleoside triphosphates as substrates. Reconstitution experiments show this subunit is required for basic activity. In Sulfolobus acidocaldarius (strain ATCC 33909 / DSM 639 / JCM 8929 / NBRC 15157 / NCIMB 11770), this protein is DNA-directed RNA polymerase subunit Rpo5.